Reading from the N-terminus, the 189-residue chain is MAQNGSEGPLLAGVAGRYALALYELAHDQGQVDDVAKNLDAFDALYRESDDLRRLVRSPAYSAAEQTAAVGALLDRAGISGLAANFIKLTAANRRLFALPGMIRAYREKVRESKGIIRAEVRVAEKPSDAVIEDIKASLRDVAKSEIDLDLHIDPSLIGGIVVKMGSRMVDASLRTKLNSIRLAMREAR.

Belongs to the ATPase delta chain family. In terms of assembly, F-type ATPases have 2 components, F(1) - the catalytic core - and F(0) - the membrane proton channel. F(1) has five subunits: alpha(3), beta(3), gamma(1), delta(1), epsilon(1). F(0) has three main subunits: a(1), b(2) and c(10-14). The alpha and beta chains form an alternating ring which encloses part of the gamma chain. F(1) is attached to F(0) by a central stalk formed by the gamma and epsilon chains, while a peripheral stalk is formed by the delta and b chains.

It localises to the cell inner membrane. In terms of biological role, f(1)F(0) ATP synthase produces ATP from ADP in the presence of a proton or sodium gradient. F-type ATPases consist of two structural domains, F(1) containing the extramembraneous catalytic core and F(0) containing the membrane proton channel, linked together by a central stalk and a peripheral stalk. During catalysis, ATP synthesis in the catalytic domain of F(1) is coupled via a rotary mechanism of the central stalk subunits to proton translocation. Functionally, this protein is part of the stalk that links CF(0) to CF(1). It either transmits conformational changes from CF(0) to CF(1) or is implicated in proton conduction. This is ATP synthase subunit delta from Methylorubrum extorquens (strain CM4 / NCIMB 13688) (Methylobacterium extorquens).